We begin with the raw amino-acid sequence, 100 residues long: Small ribosomal subunit protein uS14c (100 aa).

It belongs to the universal ribosomal protein uS14 family. In terms of assembly, part of the 30S ribosomal subunit.

The protein localises to the plastid. It is found in the chloroplast. Its function is as follows. Binds 16S rRNA, required for the assembly of 30S particles. The polypeptide is Small ribosomal subunit protein uS14c (Buxus microphylla (Littleleaf boxwood)).